The following is a 440-amino-acid chain: MRRRTSPRRTTTSKPQPIGPIQTFEVDGLTHEAKGVARLQGKVTFIEGALPGETVEAQVNKAGRRFDEAVLVNIIEPSVYRVEPSCQHFNLCGGCSFQHLANEQQLSAKADWLQGQLRNLITTQELETLSDTPTGYRRRARLAIDIKKGRMVLGFRGKASKEIISIDQCVVLTPNLQSTFLLLKLKLLENDLAGVLGHVELLEDTKGVSALFRLTSPISDELKNAWEDWAEKGRVALYWQAPKVGKAEVALEKMRYYDLGDLRLKYHPQDFIQVNAAMNQKMVVQAMDWLNPSKQDVILDLFCGVGNFSLPLAVHAQAVIGVEVQETMVEAARENARVNGFDNLSFVAADLTKPVNNELFKQTITKVLLDPPRAGAFEFLDSIIKIGPTQILYVSCNASTLARDAEYLVAKGYRVLRVSLMDMFPQTSHVETMMLLQKKK.

The interval 1–21 (MRRRTSPRRTTTSKPQPIGPI) is disordered. The region spanning 15-73 (PQPIGPIQTFEVDGLTHEAKGVARLQGKVTFIEGALPGETVEAQVNKAGRRFDEAVLVN) is the TRAM domain. [4Fe-4S] cluster contacts are provided by cysteine 86, cysteine 92, cysteine 95, and cysteine 169. S-adenosyl-L-methionine is bound by residues glutamine 273, phenylalanine 302, asparagine 307, glutamate 323, aspartate 350, and aspartate 370. The Nucleophile role is filled by cysteine 396.

This sequence belongs to the class I-like SAM-binding methyltransferase superfamily. RNA M5U methyltransferase family. RlmD subfamily.

It carries out the reaction uridine(1939) in 23S rRNA + S-adenosyl-L-methionine = 5-methyluridine(1939) in 23S rRNA + S-adenosyl-L-homocysteine + H(+). Its function is as follows. Catalyzes the formation of 5-methyl-uridine at position 1939 (m5U1939) in 23S rRNA. This is 23S rRNA (uracil(1939)-C(5))-methyltransferase RlmD from Marinomonas sp. (strain MWYL1).